Reading from the N-terminus, the 373-residue chain is Probable tRNA sulfurtransferase (373 aa).

One can recognise a THUMP domain in the interval 54–158; that stretch reads NKNIEELSKV…NDVAYFYYKI (105 aa). ATP contacts are provided by residues 176 to 177, 201 to 202, Lys-256, Gly-278, and Gln-287; these read LF and NF.

This sequence belongs to the ThiI family.

The protein resides in the cytoplasm. The enzyme catalyses [ThiI sulfur-carrier protein]-S-sulfanyl-L-cysteine + a uridine in tRNA + 2 reduced [2Fe-2S]-[ferredoxin] + ATP + H(+) = [ThiI sulfur-carrier protein]-L-cysteine + a 4-thiouridine in tRNA + 2 oxidized [2Fe-2S]-[ferredoxin] + AMP + diphosphate. It catalyses the reaction [ThiS sulfur-carrier protein]-C-terminal Gly-Gly-AMP + S-sulfanyl-L-cysteinyl-[cysteine desulfurase] + AH2 = [ThiS sulfur-carrier protein]-C-terminal-Gly-aminoethanethioate + L-cysteinyl-[cysteine desulfurase] + A + AMP + 2 H(+). The protein operates within cofactor biosynthesis; thiamine diphosphate biosynthesis. Its function is as follows. Catalyzes the ATP-dependent transfer of a sulfur to tRNA to produce 4-thiouridine in position 8 of tRNAs, which functions as a near-UV photosensor. Also catalyzes the transfer of sulfur to the sulfur carrier protein ThiS, forming ThiS-thiocarboxylate. This is a step in the synthesis of thiazole, in the thiamine biosynthesis pathway. The sulfur is donated as persulfide by IscS. This Saccharolobus islandicus (strain L.S.2.15 / Lassen #1) (Sulfolobus islandicus) protein is Probable tRNA sulfurtransferase.